A 193-amino-acid chain; its full sequence is Tellurium resistance protein TerZ (193 aa).

It belongs to the CAPAB/TerDEXZ family.

Not known; seems to contribute to the tellurium resistance (Ter) mechanism. Also involved in phage inhibition (Phi) and colicin resistance (PacB). This Serratia marcescens protein is Tellurium resistance protein TerZ (terZ).